Here is a 76-residue protein sequence, read N- to C-terminus: Theta defensin subunit A (76 aa).

The first 22 residues, 1 to 22, serve as a signal peptide directing secretion; that stretch reads MRTFALLTAMLLLVALHAQAEA. Residues 23–64 constitute a propeptide that is removed on maturation; sequence RQARADEAAAQQQPGADDQGMAHSFTWPENAALPLSESAKGL. Residues 25 to 45 form a disordered region; that stretch reads ARADEAAAQQQPGADDQGMAH. Positions 30–44 are enriched in low complexity; sequence AAAQQQPGADDQGMA. R65 participates in a covalent cross-link: Cyclopeptide (Arg-Cys) (interchain with C-73 in subunit A); in form BTD-3. A Cyclopeptide (Arg-Cys) (interchain with C-73 in subunit B); in form BTD-1 cross-link involves residue R65. Residue R65 forms a Cyclopeptide (Arg-Cys) (interchain with C-73 in subunit C); in form BTD-4 linkage. R65 is covalently cross-linked (Cyclopeptide (Arg-Cys) (interchain with C-73 in subunit D); in form BTD-7). Residues C68 and C73 are joined by a disulfide bond. C73 is covalently cross-linked (Cyclopeptide (Cys-Arg) (interchain with R-65 in subunit A); in form BTD-3). A Cyclopeptide (Cys-Arg) (interchain with R-65 in subunit B); in form BTD-1 cross-link involves residue C73. Residue C73 forms a Cyclopeptide (Cys-Arg) (interchain with R-65 in subunit C); in form BTD-4 linkage. C73 participates in a covalent cross-link: Cyclopeptide (Cys-Arg) (interchain with R-65 in subunit D); in form BTD-7. Residues 74–76 constitute a propeptide that is removed on maturation; the sequence is RLL.

It belongs to the alpha-defensin family. Theta subfamily. In terms of assembly, BTD-1 is a cyclic heterodimer composed of subunits A and B; disulfide-linked. BTD-3 is a cyclic homodimer composed of two subunits A; disulfide-linked. BTD-4 is a cyclic heterodimer composed of subunits A and C; disulfide-linked. BTD-7 is a cyclic heterodimer composed of subunits A and D; disulfide-linked. Post-translationally, forms a cyclic peptide with subunit B (BTD-1), subunit A (BTD-3), subunit C (BTD-4), or subunit D (BTD-7). An additional intersubunit disulfide bond is formed.

In terms of biological role, BTD-1, BTD-3, BTD-4 and BTD-7 have antimicrobial activity against the Gram-negative bacterium E.coli ML35, the Gram-positive bacterium S.aureus 502a, and the fungus C.albicans 16820. BTD-3 is more effective against E.coli than BTD-1, BTD-4 and BTD-7. The polypeptide is Theta defensin subunit A (BTDA) (Papio anubis (Olive baboon)).